We begin with the raw amino-acid sequence, 479 residues long: Glycogen synthase (479 aa).

An ADP-alpha-D-glucose-binding site is contributed by Lys15.

Belongs to the glycosyltransferase 1 family. Bacterial/plant glycogen synthase subfamily.

The catalysed reaction is [(1-&gt;4)-alpha-D-glucosyl](n) + ADP-alpha-D-glucose = [(1-&gt;4)-alpha-D-glucosyl](n+1) + ADP + H(+). The protein operates within glycan biosynthesis; glycogen biosynthesis. Its function is as follows. Synthesizes alpha-1,4-glucan chains using ADP-glucose. The polypeptide is Glycogen synthase (Acidiphilium cryptum (strain JF-5)).